A 309-amino-acid polypeptide reads, in one-letter code: Dihydroorotate dehydrogenase B (NAD(+)), catalytic subunit (309 aa).

FMN-binding positions include Ser21 and 45–46 (KA). Residues Lys45 and 69–73 (NAIGL) each bind substrate. Residues Asn99 and Asn127 each contribute to the FMN site. Residue Asn127 coordinates substrate. Cys130 serves as the catalytic Nucleophile. Lys165 and Ile191 together coordinate FMN. Substrate is bound at residue 192–193 (NT). FMN is bound by residues Gly217, 243–244 (GG), and 265–266 (GT).

The protein belongs to the dihydroorotate dehydrogenase family. Type 1 subfamily. As to quaternary structure, heterotetramer of 2 PyrK and 2 PyrD type B subunits. It depends on FMN as a cofactor.

It localises to the cytoplasm. The enzyme catalyses (S)-dihydroorotate + NAD(+) = orotate + NADH + H(+). The protein operates within pyrimidine metabolism; UMP biosynthesis via de novo pathway; orotate from (S)-dihydroorotate (NAD(+) route): step 1/1. In terms of biological role, catalyzes the conversion of dihydroorotate to orotate with NAD(+) as electron acceptor. This chain is Dihydroorotate dehydrogenase B (NAD(+)), catalytic subunit (pyrD), found in Bacillus cereus (strain ATCC 14579 / DSM 31 / CCUG 7414 / JCM 2152 / NBRC 15305 / NCIMB 9373 / NCTC 2599 / NRRL B-3711).